We begin with the raw amino-acid sequence, 218 residues long: Sodium channel regulatory subunit beta-1 (218 aa).

The signal sequence occupies residues 1-18 (MGRLLAFVVGAALVSSAW). Topologically, residues 19-157 (GGCVEVDSET…DKANRDMASI (139 aa)) are extracellular. 2 disulfide bridges follow: Cys-21–Cys-43 and Cys-40–Cys-121. The Ig-like C2-type domain occupies 22–150 (VEVDSETEAV…KIHLEVVDKA (129 aa)). Asn-93, Asn-110, Asn-114, and Asn-135 each carry an N-linked (GlcNAc...) asparagine glycan. The chain crosses the membrane as a helical span at residues 158–179 (VSEIMMYVLIVVLTIWLVAEMV). Residues 180 to 218 (YCYKKIAAATEAAAQENASEYLAITSESKENCTGVQVAE) lie on the Cytoplasmic side of the membrane.

This sequence belongs to the sodium channel auxiliary subunit SCN1B (TC 8.A.17) family. In terms of assembly, a voltage-gated sodium (Nav) channel consists of an ion-conducting pore-forming alpha subunit functional on its own that is regulated by one or more beta subunits. Interacts with SCN1A; regulatory subunit of SCN1A/Nav1.1. Interacts with SCN3A; regulatory subunit of SCN3A/Nav1.3. Interacts with SCN4A; regulatory subunit of SCN4A/Nav1.4. Interacts with SCN5A; regulatory subunit of SCN5A/Nav1.5. Interacts with SCN8A; regulatory subunit of SCN8A/Nav1.6. Interacts with SCN9A; regulatory subunit of SCN9A/Nav1.7. Interacts with SCN10A; regulatory subunit of SCN10A/Nav1.8. Interacts with NFASC. Interacts with TMEM65.

Its subcellular location is the cell membrane. The protein resides in the perikaryon. The protein localises to the cell projection. It is found in the axon. In terms of biological role, regulatory subunit of multiple voltage-gated sodium (Nav) channels directly mediating the depolarization of excitable membranes. Navs, also called VGSCs (voltage-gated sodium channels) or VDSCs (voltage-dependent sodium channels), operate by switching between closed and open conformations depending on the voltage difference across the membrane. In the open conformation they allow Na(+) ions to selectively pass through the pore, along their electrochemical gradient. The influx of Na+ ions provokes membrane depolarization, initiating the propagation of electrical signals throughout cells and tissues. The accessory beta subunits participate in localization and functional modulation of the Nav channels. Modulates the activity of SCN1A/Nav1.1, SCN2A/Nav1.2, SCN3A/Nav1.3, SCN4A/Nav1.4, SCN5A/Nav1.5, SCN8A/Nav1.6, SCN9A/Nav1.7 and SCN10A/Nav1.8. The sequence is that of Sodium channel regulatory subunit beta-1 from Oryctolagus cuniculus (Rabbit).